A 250-amino-acid polypeptide reads, in one-letter code: Ribose-5-phosphate isomerase A (250 aa).

Residues 33–36 (TGST), 89–92 (DGAD), and 102–105 (KGGG) each bind substrate. The active-site Proton acceptor is the glutamate 111. Residue lysine 129 coordinates substrate.

The protein belongs to the ribose 5-phosphate isomerase family. As to quaternary structure, homodimer.

The catalysed reaction is aldehydo-D-ribose 5-phosphate = D-ribulose 5-phosphate. Its pathway is carbohydrate degradation; pentose phosphate pathway; D-ribose 5-phosphate from D-ribulose 5-phosphate (non-oxidative stage): step 1/1. Functionally, catalyzes the reversible conversion of ribose-5-phosphate to ribulose 5-phosphate. The chain is Ribose-5-phosphate isomerase A from Cereibacter sphaeroides (strain ATCC 17025 / ATH 2.4.3) (Rhodobacter sphaeroides).